Reading from the N-terminus, the 598-residue chain is NADH-quinone oxidoreductase subunit C/D (598 aa).

Residues 1–189 (MTDLTTSDSL…DPYVLTKQKE (189 aa)) form an NADH dehydrogenase I subunit C region. Positions 213-598 (DFMFLNLGPN…IDFVMSDVDR (386 aa)) are NADH dehydrogenase I subunit D.

It in the N-terminal section; belongs to the complex I 30 kDa subunit family. The protein in the C-terminal section; belongs to the complex I 49 kDa subunit family. As to quaternary structure, NDH-1 is composed of 13 different subunits. Subunits NuoB, CD, E, F, and G constitute the peripheral sector of the complex.

It is found in the cell inner membrane. It catalyses the reaction a quinone + NADH + 5 H(+)(in) = a quinol + NAD(+) + 4 H(+)(out). Functionally, NDH-1 shuttles electrons from NADH, via FMN and iron-sulfur (Fe-S) centers, to quinones in the respiratory chain. The immediate electron acceptor for the enzyme in this species is believed to be ubiquinone. Couples the redox reaction to proton translocation (for every two electrons transferred, four hydrogen ions are translocated across the cytoplasmic membrane), and thus conserves the redox energy in a proton gradient. In Yersinia pseudotuberculosis serotype O:1b (strain IP 31758), this protein is NADH-quinone oxidoreductase subunit C/D.